The sequence spans 103 residues: Large ribosomal subunit protein bL21 (103 aa).

Belongs to the bacterial ribosomal protein bL21 family. Part of the 50S ribosomal subunit. Contacts protein L20.

In terms of biological role, this protein binds to 23S rRNA in the presence of protein L20. The polypeptide is Large ribosomal subunit protein bL21 (Mycobacterium tuberculosis (strain ATCC 25618 / H37Rv)).